The following is a 323-amino-acid chain: Sodium/potassium-transporting ATPase subunit beta-2 (323 aa).

Topologically, residues 1 to 50 (MPTITEDCIDGFQQYYSRPPERPKKKSLKQMVYDSEDNSYFGRSMDSWAK) are cytoplasmic. A helical; Signal-anchor for type II membrane protein membrane pass occupies residues 51 to 71 (IGIFYVAFYGVLAALVAICMW). The Extracellular segment spans residues 72 to 323 (AFFQTLDPRI…GSVHYELLID (252 aa)). Cystine bridges form between C153–C165 and C175–C189. N180 and N206 each carry an N-linked (GlcNAc...) asparagine glycan. C241 and C298 are joined by a disulfide.

The protein belongs to the X(+)/potassium ATPases subunit beta family. In terms of assembly, the sodium/potassium-transporting ATPase is composed of a catalytic alpha subunit, an auxiliary non-catalytic beta subunit and an additional regulatory subunit. In terms of tissue distribution, in embryos, it is expressed in the neurons of the CNS and PNS, in Garland cells and posterior spiracles. In adults, it shows a nervous system specific distribution: optic lobes, brain, thoracic ganglia and axonal pathways in the leg. Both isoforms concentrate in the adult head, isoform 2.2 being predominant. Both isoforms are weakly expressed in the thorax and very poorly expressed in the abdomen.

The protein resides in the cell membrane. This is the non-catalytic component of the active enzyme, which catalyzes the hydrolysis of ATP coupled with the exchange of Na(+) and K(+) ions across the plasma membrane. The beta subunit regulates, through assembly of alpha/beta heterodimers, the number of sodium pumps transported to the plasma membrane. The sequence is that of Sodium/potassium-transporting ATPase subunit beta-2 (nrv2) from Drosophila melanogaster (Fruit fly).